A 333-amino-acid chain; its full sequence is Glutamyl endopeptidase (333 aa).

A signal peptide spans 1–29 (MKGKFLKVSSLFVATLTTATLVSSPAANA). Residues 30–68 (LSSKAMDNHPQQSQSSKQQTPKIQKGGNLKPLEQREHAN) constitute a propeptide that is removed on maturation. The segment at 33–61 (KAMDNHPQQSQSSKQQTPKIQKGGNLKPL) is disordered. Residues 40 to 54 (QQSQSSKQQTPKIQK) are compositionally biased toward low complexity. Residues histidine 119, aspartate 161, and serine 237 each act as charge relay system in the active site. Positions 283 to 333 (FANDDQPNNPDNPDNPNNPDNPNNPDNPNNPNNPDNPDNGDNNNSDNPDAA) are disordered. Residues 286–333 (DDQPNNPDNPDNPNNPDNPNNPDNPNNPNNPDNPDNGDNNNSDNPDAA) show a composition bias toward low complexity. 11 consecutive repeat copies span residues 289 to 291 (PNN), 292 to 294 (PDN), 295 to 297 (PDN), 298 to 300 (PNN), 301 to 303 (PDN), 304 to 306 (PNN), 307 to 309 (PDN), 310 to 312 (PNN), 313 to 315 (PNN), 316 to 318 (PDN), and 319 to 321 (PDN). The segment at 289-321 (PNNPDNPDNPNNPDNPNNPDNPNNPNNPDNPDN) is 11 X 3 AA repeats of P-[DN]-N.

Belongs to the peptidase S1B family. Post-translationally, proteolytically cleaved by aureolysin (aur). This cleavage leads to the activation of SspA.

The protein localises to the secreted. It carries out the reaction Preferential cleavage: Glu-|-Xaa, Asp-|-Xaa.. Functionally, preferentially cleaves peptide bonds on the carboxyl-terminal side of aspartate and glutamate. Along with other extracellular proteases it is involved in colonization and infection of human tissues. Required for proteolytic maturation of thiol protease SspB and inactivation of SspC, an inhibitor of SspB. It is the most important protease for degradation of fibronectin-binding protein (FnBP) and surface protein A, which are involved in adherence to host cells. May also protect bacteria against host defense mechanism by cleaving the immunoglobulin classes IgG, IgA and IgM. May be involved in the stability of secreted lipases. This Staphylococcus aureus (strain MSSA476) protein is Glutamyl endopeptidase (sspA).